The primary structure comprises 256 residues: uncharacterized protein (256 aa).

A coiled-coil region spans residues 213–243 (TMSMEAKLEAAKKTLEKFKQEAASKRAKRTK). A disordered region spans residues 231-256 (KQEAASKRAKRTKPSGSKTTRSTGRK). A compositionally biased stretch (polar residues) spans 244–256 (PSGSKTTRSTGRK).

This is an uncharacterized protein from Acanthamoeba polyphaga (Amoeba).